We begin with the raw amino-acid sequence, 311 residues long: Protoheme IX farnesyltransferase (311 aa).

9 consecutive transmembrane segments (helical) span residues 32–52, 53–73, 104–124, 125–145, 153–173, 180–200, 224–244, 245–265, and 285–305; these read VMSLVVFTALVGLMVSPVPIN, PWYGFLAIICIAVGGGGAGAL, FIFGMVLSLLSVLVMGSFINW, FAAFFLAFTIFFYVVIYTIWL, IVIGGASGAFPPMIGWAVTTG, FLLFLIIFMWTPPHFWALSLF, KQILFYTVLMVLCATAPCFTG, LGGVFYGIFSTILGIIFIYFA, and FFFSLLYLAAVFGALLIESLV.

Belongs to the UbiA prenyltransferase family. Protoheme IX farnesyltransferase subfamily.

Its subcellular location is the cell inner membrane. It carries out the reaction heme b + (2E,6E)-farnesyl diphosphate + H2O = Fe(II)-heme o + diphosphate. Its pathway is porphyrin-containing compound metabolism; heme O biosynthesis; heme O from protoheme: step 1/1. In terms of biological role, converts heme B (protoheme IX) to heme O by substitution of the vinyl group on carbon 2 of heme B porphyrin ring with a hydroxyethyl farnesyl side group. The chain is Protoheme IX farnesyltransferase from Bartonella tribocorum (strain CIP 105476 / IBS 506).